Reading from the N-terminus, the 153-residue chain is Endoribonuclease YbeY (153 aa).

3 residues coordinate Zn(2+): histidine 116, histidine 120, and histidine 126.

This sequence belongs to the endoribonuclease YbeY family. Requires Zn(2+) as cofactor.

The protein localises to the cytoplasm. Single strand-specific metallo-endoribonuclease involved in late-stage 70S ribosome quality control and in maturation of the 3' terminus of the 16S rRNA. The protein is Endoribonuclease YbeY of Clavibacter sepedonicus (Clavibacter michiganensis subsp. sepedonicus).